Reading from the N-terminus, the 233-residue chain is Large ribosomal subunit protein uL1 (233 aa).

Belongs to the universal ribosomal protein uL1 family. Part of the 50S ribosomal subunit.

Binds directly to 23S rRNA. The L1 stalk is quite mobile in the ribosome, and is involved in E site tRNA release. Functionally, protein L1 is also a translational repressor protein, it controls the translation of the L11 operon by binding to its mRNA. The chain is Large ribosomal subunit protein uL1 from Shewanella putrefaciens (strain CN-32 / ATCC BAA-453).